Here is a 396-residue protein sequence, read N- to C-terminus: 1-deoxy-D-xylulose 5-phosphate reductoisomerase (396 aa).

Residues threonine 13, glycine 14, serine 15, valine 16, and asparagine 127 each contribute to the NADPH site. Lysine 128 contacts 1-deoxy-D-xylulose 5-phosphate. Glutamate 129 lines the NADPH pocket. Mn(2+) is bound at residue aspartate 153. 1-deoxy-D-xylulose 5-phosphate contacts are provided by serine 154, glutamate 155, serine 184, and histidine 207. Residue glutamate 155 participates in Mn(2+) binding. Position 213 (glycine 213) interacts with NADPH. Positions 220, 225, 226, and 229 each coordinate 1-deoxy-D-xylulose 5-phosphate. Glutamate 229 provides a ligand contact to Mn(2+).

Belongs to the DXR family. Requires Mg(2+) as cofactor. The cofactor is Mn(2+).

The catalysed reaction is 2-C-methyl-D-erythritol 4-phosphate + NADP(+) = 1-deoxy-D-xylulose 5-phosphate + NADPH + H(+). It participates in isoprenoid biosynthesis; isopentenyl diphosphate biosynthesis via DXP pathway; isopentenyl diphosphate from 1-deoxy-D-xylulose 5-phosphate: step 1/6. Its function is as follows. Catalyzes the NADPH-dependent rearrangement and reduction of 1-deoxy-D-xylulose-5-phosphate (DXP) to 2-C-methyl-D-erythritol 4-phosphate (MEP). The chain is 1-deoxy-D-xylulose 5-phosphate reductoisomerase from Pseudomonas fluorescens (strain SBW25).